An 891-amino-acid chain; its full sequence is Aconitate hydratase A (891 aa).

Cys-435, Cys-501, and Cys-504 together coordinate [4Fe-4S] cluster.

The protein belongs to the aconitase/IPM isomerase family. In terms of assembly, monomer. [4Fe-4S] cluster is required as a cofactor.

It carries out the reaction citrate = D-threo-isocitrate. Its pathway is carbohydrate metabolism; tricarboxylic acid cycle; isocitrate from oxaloacetate: step 2/2. Catalyzes the reversible isomerization of citrate to isocitrate via cis-aconitate. The apo form of AcnA functions as a RNA-binding regulatory protein which plays a role as a maintenance or survival enzyme during nutritional or oxidative stress. During oxidative stress inactive AcnA apo-enzyme without iron sulfur clusters binds the acnA mRNA 3' UTRs (untranslated regions), stabilizes acnA mRNA and increases AcnA synthesis, thus mediating a post-transcriptional positive autoregulatory switch. AcnA also enhances the stability of the sodA transcript. The chain is Aconitate hydratase A from Escherichia coli (strain K12).